The sequence spans 702 residues: Putative GMC-type oxidoreductase R135 (702 aa).

The chain crosses the membrane as a helical span at residues leucine 55–leucine 75. Position 58–88 (aspartate 58–alanine 88) interacts with FAD. Residue histidine 628 is part of the active site.

The protein belongs to the GMC oxidoreductase family. Requires FAD as cofactor.

The protein localises to the virion. The protein resides in the host membrane. The chain is Putative GMC-type oxidoreductase R135 from Acanthamoeba polyphaga (Amoeba).